Here is a 512-residue protein sequence, read N- to C-terminus: Maturase K (512 aa).

Belongs to the intron maturase 2 family. MatK subfamily.

The protein localises to the plastid. It is found in the chloroplast. Functionally, usually encoded in the trnK tRNA gene intron. Probably assists in splicing its own and other chloroplast group II introns. The sequence is that of Maturase K from Platanus occidentalis (Sycamore).